A 305-amino-acid polypeptide reads, in one-letter code: Methionyl-tRNA formyltransferase (305 aa).

111–114 (SLLP) contributes to the (6S)-5,6,7,8-tetrahydrofolate binding site.

The protein belongs to the Fmt family.

The enzyme catalyses L-methionyl-tRNA(fMet) + (6R)-10-formyltetrahydrofolate = N-formyl-L-methionyl-tRNA(fMet) + (6S)-5,6,7,8-tetrahydrofolate + H(+). In terms of biological role, attaches a formyl group to the free amino group of methionyl-tRNA(fMet). The formyl group appears to play a dual role in the initiator identity of N-formylmethionyl-tRNA by promoting its recognition by IF2 and preventing the misappropriation of this tRNA by the elongation apparatus. In Campylobacter jejuni subsp. jejuni serotype O:23/36 (strain 81-176), this protein is Methionyl-tRNA formyltransferase.